Reading from the N-terminus, the 174-residue chain is Thiol-disulfide oxidoreductase ResA (174 aa).

A helical; Signal-anchor for type II membrane protein membrane pass occupies residues 11 to 30 (TVILLLLLAALGYTIYANFF). Residues 36-174 (VAVGSTAPDF…IKQHLESIKP (139 aa)) enclose the Thioredoxin domain. A disulfide bond links C74 and C77.

This sequence belongs to the thioredoxin family. ResA subfamily.

The protein resides in the cell membrane. It participates in protein modification; cytochrome c assembly. Functionally, thiol-disulfide oxidoreductase which is required in disulfide reduction during c-type cytochrome synthesis. May accept reducing equivalents from CcdA, leading to breakage of disulfide bonds in apocytochrome c; following this reduction heme can be covalently attached. The polypeptide is Thiol-disulfide oxidoreductase ResA (Geobacillus thermodenitrificans (strain NG80-2)).